Consider the following 149-residue polypeptide: Thioredoxin-like protein 4B (149 aa).

This sequence belongs to the DIM1 family. In terms of assembly, homodimer. Interacts with the U5-102 kDa protein subunit of the spliceosome.

The protein localises to the nucleus. In terms of biological role, essential role in pre-mRNA splicing. Required in cell cycle progression for S/G(2) transition. The chain is Thioredoxin-like protein 4B (TXNL4B) from Homo sapiens (Human).